Consider the following 433-residue polypeptide: Histidine--tRNA ligase (433 aa).

This sequence belongs to the class-II aminoacyl-tRNA synthetase family. Homodimer.

Its subcellular location is the cytoplasm. It catalyses the reaction tRNA(His) + L-histidine + ATP = L-histidyl-tRNA(His) + AMP + diphosphate + H(+). The chain is Histidine--tRNA ligase from Crocosphaera subtropica (strain ATCC 51142 / BH68) (Cyanothece sp. (strain ATCC 51142)).